The sequence spans 387 residues: Acetylserotonin O-methyltransferase (387 aa).

S-adenosyl-L-methionine contacts are provided by residues Tyr-153, Trp-170, Glu-216, 246–248, and Arg-263; that span reads GDF. The active-site Proton donor/acceptor is the His-266. Substrate-binding residues include Asp-267 and Gln-317. The interval 354-387 is disordered; that stretch reads AARGGGAGARSDGGGGDATSQTGSGTGSEVGAQD. Residues 356–370 are compositionally biased toward gly residues; the sequence is RGGGAGARSDGGGGD.

This sequence belongs to the class I-like SAM-binding methyltransferase superfamily. Cation-independent O-methyltransferase family. In terms of assembly, homodimer. Expressed predominantly in the pineal gland (at protein level). Very low expression, if any, in the retina.

The enzyme catalyses N-acetylserotonin + S-adenosyl-L-methionine = melatonin + S-adenosyl-L-homocysteine + H(+). It participates in aromatic compound metabolism; melatonin biosynthesis; melatonin from serotonin: step 1/2. Its function is as follows. Catalyzes the transfer of a methyl group onto N-acetylserotonin, producing melatonin (N-acetyl-5-methoxytryptamine). In Mus musculus (Mouse), this protein is Acetylserotonin O-methyltransferase (Asmt).